Here is a 687-residue protein sequence, read N- to C-terminus: Follicle-stimulating hormone receptor (687 aa).

An N-terminal signal peptide occupies residues 1-17 (MALLLVSLLAFLSLGSG). The LRRNT domain maps to 18 to 46 (CHHQVCHYSNRVFLCQESKVTEIPSDLPR). The Extracellular portion of the chain corresponds to 18–358 (CHHQVCHYSN…EDIMGYDILR (341 aa)). Residues C23 and C32 are joined by a disulfide bond. LRR repeat units lie at residues 49–72 (LELR…FGDL), 73–97 (KKIE…LPKL), 98–118 (HEIR…AFQN), 119–143 (LPNL…KIQS), 144–169 (LQKV…MGLS), 170–192 (FESM…AFNG), 193–216 (TQLD…VFQG), 217–240 (ASGP…GLEN), and 241–259 (LKKL…PSLE). N191 and N199 each carry an N-linked (GlcNAc...) asparagine glycan. Cystine bridges form between C275–C338, C276–C292, C276–C348, and C292–C330. The N-linked (GlcNAc...) asparagine glycan is linked to N293. The residue at position 327 (Y327) is a Sulfotyrosine. Residues 359–379 (VLIWFISILAITGNIIVLVIL) traverse the membrane as a helical segment. Topologically, residues 380-390 (ITSQYKLTVPR) are cytoplasmic. The chain crosses the membrane as a helical span at residues 391–413 (FLMCNLAFADLCIGIYLLLIASV). The Extracellular portion of the chain corresponds to 414–435 (DIHTKSQYHNYAIDWQTGAGCD). A disulfide bond links C434 and C509. Residues 436–457 (AAGFFTVFGSELSVYTLTAITL) traverse the membrane as a helical segment. The Cytoplasmic segment spans residues 458–477 (ERWHTITHAMQLECKVQLRH). A helical membrane pass occupies residues 478 to 500 (AASVMLVGWIFGFGVGLLPIFGI). Residues 501 to 520 (STYMKVSICLPMDIDSPLSQ) are Extracellular-facing. Residues 521-542 (LYVMSLLVLNVLAFVVICGCYT) form a helical membrane-spanning segment. Over 543 to 565 (HIYLTVRNPNIVSSSSDTKIAKR) the chain is Cytoplasmic. A helical transmembrane segment spans residues 566-589 (MGILIFTDFLCMAPISFFGISASL). The Extracellular portion of the chain corresponds to 590 to 600 (KVALITVSKSK). A helical membrane pass occupies residues 601 to 622 (ILLVLFYPINSCANPFLYAIFT). Over 623 to 687 (KNFRRDFFIL…LVPLSHLAQN (65 aa)) the chain is Cytoplasmic.

It belongs to the G-protein coupled receptor 1 family. FSH/LSH/TSH subfamily. As to quaternary structure, homotrimer. Functions as a homotrimer binding the FSH hormone heterodimer composed of CGA and FSHB. Interacts with ARRB2. Interacts with APPL2; interaction is independent of follicle stimulating hormone stimulation. N-glycosylated; indirectly required for FSH-binding, possibly via a conformational change that allows high affinity binding of hormone. Post-translationally, sulfated.

It is found in the cell membrane. Functionally, g protein-coupled receptor for follitropin, the follicle-stimulating hormone. Through cAMP production activates the downstream PI3K-AKT and ERK1/ERK2 signaling pathways. The chain is Follicle-stimulating hormone receptor (FSHR) from Equus asinus (Donkey).